We begin with the raw amino-acid sequence, 156 residues long: Small ribosomal subunit protein uS7 (156 aa).

The protein belongs to the universal ribosomal protein uS7 family. Part of the 30S ribosomal subunit. Contacts proteins S9 and S11.

In terms of biological role, one of the primary rRNA binding proteins, it binds directly to 16S rRNA where it nucleates assembly of the head domain of the 30S subunit. Is located at the subunit interface close to the decoding center, probably blocks exit of the E-site tRNA. In Dictyoglomus thermophilum (strain ATCC 35947 / DSM 3960 / H-6-12), this protein is Small ribosomal subunit protein uS7.